The primary structure comprises 505 residues: ATP synthase subunit beta (505 aa).

The segment at 1–25 (MAKAATPKETAAVKKPAAPKKAATA) is disordered. ATP is bound at residue 183-190 (GGAGVGKT).

Belongs to the ATPase alpha/beta chains family. In terms of assembly, F-type ATPases have 2 components, CF(1) - the catalytic core - and CF(0) - the membrane proton channel. CF(1) has five subunits: alpha(3), beta(3), gamma(1), delta(1), epsilon(1). CF(0) has three main subunits: a(1), b(2) and c(9-12). The alpha and beta chains form an alternating ring which encloses part of the gamma chain. CF(1) is attached to CF(0) by a central stalk formed by the gamma and epsilon chains, while a peripheral stalk is formed by the delta and b chains.

Its subcellular location is the cell inner membrane. The catalysed reaction is ATP + H2O + 4 H(+)(in) = ADP + phosphate + 5 H(+)(out). Produces ATP from ADP in the presence of a proton gradient across the membrane. The catalytic sites are hosted primarily by the beta subunits. The sequence is that of ATP synthase subunit beta from Sinorhizobium fredii (strain NBRC 101917 / NGR234).